Consider the following 426-residue polypeptide: Histidine--tRNA ligase (426 aa).

This sequence belongs to the class-II aminoacyl-tRNA synthetase family. As to quaternary structure, homodimer.

The protein localises to the cytoplasm. The catalysed reaction is tRNA(His) + L-histidine + ATP = L-histidyl-tRNA(His) + AMP + diphosphate + H(+). This Streptococcus sanguinis (strain SK36) protein is Histidine--tRNA ligase.